Consider the following 265-residue polypeptide: Hydroxyethylthiazole kinase 2 (265 aa).

M39 is a substrate binding site. The ATP site is built by K115 and T168. G195 serves as a coordination point for substrate.

Belongs to the Thz kinase family. Mg(2+) is required as a cofactor.

The catalysed reaction is 5-(2-hydroxyethyl)-4-methylthiazole + ATP = 4-methyl-5-(2-phosphooxyethyl)-thiazole + ADP + H(+). Its pathway is cofactor biosynthesis; thiamine diphosphate biosynthesis; 4-methyl-5-(2-phosphoethyl)-thiazole from 5-(2-hydroxyethyl)-4-methylthiazole: step 1/1. In terms of biological role, catalyzes the phosphorylation of the hydroxyl group of 4-methyl-5-beta-hydroxyethylthiazole (THZ). The sequence is that of Hydroxyethylthiazole kinase 2 from Clostridium botulinum (strain Kyoto / Type A2).